The chain runs to 291 residues: 4-hydroxy-tetrahydrodipicolinate synthase (291 aa).

T44 serves as a coordination point for pyruvate. The active-site Proton donor/acceptor is the Y132. K160 acts as the Schiff-base intermediate with substrate in catalysis. V202 provides a ligand contact to pyruvate.

It belongs to the DapA family. In terms of assembly, homotetramer; dimer of dimers.

Its subcellular location is the cytoplasm. It carries out the reaction L-aspartate 4-semialdehyde + pyruvate = (2S,4S)-4-hydroxy-2,3,4,5-tetrahydrodipicolinate + H2O + H(+). It functions in the pathway amino-acid biosynthesis; L-lysine biosynthesis via DAP pathway; (S)-tetrahydrodipicolinate from L-aspartate: step 3/4. Its function is as follows. Catalyzes the condensation of (S)-aspartate-beta-semialdehyde [(S)-ASA] and pyruvate to 4-hydroxy-tetrahydrodipicolinate (HTPA). This chain is 4-hydroxy-tetrahydrodipicolinate synthase, found in Clostridium perfringens (strain SM101 / Type A).